A 602-amino-acid chain; its full sequence is Aspartate--tRNA(Asp/Asn) ligase (602 aa).

Glu176 lines the L-aspartate pocket. The tract at residues 200–203 (QQFK) is aspartate. Residues Arg222 and His452 each coordinate L-aspartate. Position 222-224 (222-224 (RDE)) interacts with ATP. Residue Glu490 participates in ATP binding. Arg497 lines the L-aspartate pocket. 542–545 (GIDR) lines the ATP pocket.

The protein belongs to the class-II aminoacyl-tRNA synthetase family. Type 1 subfamily. In terms of assembly, homodimer.

Its subcellular location is the cytoplasm. It catalyses the reaction tRNA(Asx) + L-aspartate + ATP = L-aspartyl-tRNA(Asx) + AMP + diphosphate. Aspartyl-tRNA synthetase with relaxed tRNA specificity since it is able to aspartylate not only its cognate tRNA(Asp) but also tRNA(Asn). Reaction proceeds in two steps: L-aspartate is first activated by ATP to form Asp-AMP and then transferred to the acceptor end of tRNA(Asp/Asn). The protein is Aspartate--tRNA(Asp/Asn) ligase of Rickettsia canadensis (strain McKiel).